Consider the following 63-residue polypeptide: MGCGNSTATSAAAGRGPTGAVKDTTEDSITEDDKRRNYGGVYVGLPSEAVNMASSQTKTVQKN.

A compositionally biased stretch (polar residues) spans 1–10; that stretch reads MGCGNSTATS. The tract at residues 1 to 39 is disordered; the sequence is MGCGNSTATSAAAGRGPTGAVKDTTEDSITEDDKRRNYG.

This sequence belongs to the OCC1 family.

The sequence is that of Overexpressed in colon carcinoma 1 protein homolog from Mus musculus (Mouse).